The primary structure comprises 402 residues: Phosphoribulokinase, chloroplastic (402 aa).

A chloroplast-targeting transit peptide spans 1 to 51 (MAVCTVYTIPTTTHLGSSFNQNNKQVFFNYKRSSSSNNTLFTTRPSYVITC). C67 and C106 are disulfide-bonded.

Belongs to the phosphoribulokinase family.

It localises to the plastid. It is found in the chloroplast. It catalyses the reaction D-ribulose 5-phosphate + ATP = D-ribulose 1,5-bisphosphate + ADP + H(+). It participates in carbohydrate biosynthesis; Calvin cycle. Its activity is regulated as follows. Light regulated via thioredoxin by reversible oxidation/reduction of sulfhydryl/disulfide groups. This chain is Phosphoribulokinase, chloroplastic, found in Spinacia oleracea (Spinach).